A 158-amino-acid chain; its full sequence is Small ribosomal subunit protein uS9 (158 aa).

This sequence belongs to the universal ribosomal protein uS9 family.

The polypeptide is Small ribosomal subunit protein uS9 (Brucella canis (strain ATCC 23365 / NCTC 10854 / RM-666)).